A 1385-amino-acid chain; its full sequence is Coiled-coil domain-containing protein 7 (1385 aa).

Residues 299–330 adopt a coiled-coil conformation; the sequence is LDAEYKQMQCDFQLLSEEKLVLENELQKLKDK. Residues 329 to 364 are disordered; sequence DKEKTKPTNNRTKKAVKTVKKKDKGKSEDSEKKMSP. The segment covering 339–352 has biased composition (basic residues); it reads RTKKAVKTVKKKDK. Residues 353 to 364 show a composition bias toward basic and acidic residues; sequence GKSEDSEKKMSP. The stretch at 374–411 forms a coiled coil; it reads LDQVQKVARLEIENKVLQEQLKQALQEAEKAKHQLNYF. Disordered regions lie at residues 422–545, 572–752, and 809–834; these read GKTE…SKEV, TESK…EPNE, and TKKL…LKHQ. Over residues 425-436 the composition is skewed to polar residues; the sequence is ETTMQVGNSQTK. Composition is skewed to basic and acidic residues over residues 437–455 and 481–490; these read VKGE…RKSL and LIEKSSEKKR. Composition is skewed to polar residues over residues 493–503, 511–528, and 536–545; these read PAISDLSQILK, LESS…YKSP, and LTTVSSSKEV. Residues 573–589 show a composition bias toward basic and acidic residues; sequence ESKKADVSEEQLQKMTE. Residues 654–664 are compositionally biased toward polar residues; the sequence is RIQSETKNLKA. 2 stretches are compositionally biased toward basic and acidic residues: residues 665-676 and 685-697; these read TRNESFHSHNDV and QDTK…EVKK. The segment covering 701 to 711 has biased composition (polar residues); it reads FQDNQLSTHNE. Basic and acidic residues predominate over residues 712 to 726; it reads VPNERLVVEHQESLS.

Expressed in epithelium of normal cervix and cervical cancer. Overexpressed in early and interim cervical cancer.

In terms of biological role, may play a role in tumorigenesis. The sequence is that of Coiled-coil domain-containing protein 7 (CCDC7) from Homo sapiens (Human).